The sequence spans 182 residues: ADP-ribosylation factor 1 (182 aa).

Residue G2 is the site of N-myristoyl glycine attachment. Residues 24–31, 67–71, and 126–129 each bind GTP; these read GLDNAGKT, DLGGQ, and NKQD.

It belongs to the small GTPase superfamily. Arf family.

It localises to the golgi apparatus. It catalyses the reaction GTP + H2O = GDP + phosphate + H(+). Its function is as follows. GTP-binding protein involved in protein trafficking; may modulate vesicle budding and uncoating within the Golgi apparatus. This chain is ADP-ribosylation factor 1 (ARF1), found in Brassica rapa subsp. pekinensis (Chinese cabbage).